Reading from the N-terminus, the 442-residue chain is tRNA-2-methylthio-N(6)-dimethylallyladenosine synthase (442 aa).

Residues 2–120 enclose the MTTase N-terminal domain; sequence KKVFIRTFGC…LPKMIVDKET (119 aa). [4Fe-4S] cluster is bound by residues C11, C49, C83, C157, C161, and C164. In terms of domain architecture, Radical SAM core spans 143–375; it reads RVEGGAAFVS…NEVIEAETAR (233 aa). The region spanning 378–441 is the TRAM domain; it reads QTMIGTVQRC…TFSLRGKVVE (64 aa).

This sequence belongs to the methylthiotransferase family. MiaB subfamily. Monomer. Requires [4Fe-4S] cluster as cofactor.

It is found in the cytoplasm. It catalyses the reaction N(6)-dimethylallyladenosine(37) in tRNA + (sulfur carrier)-SH + AH2 + 2 S-adenosyl-L-methionine = 2-methylsulfanyl-N(6)-dimethylallyladenosine(37) in tRNA + (sulfur carrier)-H + 5'-deoxyadenosine + L-methionine + A + S-adenosyl-L-homocysteine + 2 H(+). Its function is as follows. Catalyzes the methylthiolation of N6-(dimethylallyl)adenosine (i(6)A), leading to the formation of 2-methylthio-N6-(dimethylallyl)adenosine (ms(2)i(6)A) at position 37 in tRNAs that read codons beginning with uridine. The chain is tRNA-2-methylthio-N(6)-dimethylallyladenosine synthase from Neisseria meningitidis serogroup C (strain 053442).